A 282-amino-acid polypeptide reads, in one-letter code: Homeobox protein Hox-C12 (282 aa).

2 disordered regions span residues 94–129 and 147–214; these read YYRE…PLEP and GGDG…NSRS. Residues 162–175 show a composition bias toward low complexity; sequence SCQSLESDSSSSLL. A DNA-binding region (homeobox) is located at residues 214–273; that stretch reads SRKKRKPYSKLQLAELEGEFLVNEFITRQRRRELSDRLNLSDQQVKIWFQNRRMKKKRLL.

The protein belongs to the Abd-B homeobox family.

The protein resides in the nucleus. In terms of biological role, sequence-specific transcription factor which is part of a developmental regulatory system that provides cells with specific positional identities on the anterior-posterior axis. In Homo sapiens (Human), this protein is Homeobox protein Hox-C12 (HOXC12).